A 63-amino-acid polypeptide reads, in one-letter code: Small ribosomal subunit protein eS31 (63 aa).

Zn(2+)-binding residues include Cys34, Cys37, Cys53, and Cys56. A C4-type zinc finger spans residues 34–56; that stretch reads CPKCGSVMAFHREPVPRWHCGKC.

This sequence belongs to the eukaryotic ribosomal protein eS31 family. Part of the 30S ribosomal subunit. It depends on Zn(2+) as a cofactor.

This chain is Small ribosomal subunit protein eS31, found in Pyrobaculum neutrophilum (strain DSM 2338 / JCM 9278 / NBRC 100436 / V24Sta) (Thermoproteus neutrophilus).